A 1146-amino-acid polypeptide reads, in one-letter code: Ankyrin repeat and fibronectin type-III domain-containing protein 1 (1146 aa).

ANK repeat units lie at residues 133–162 and 170–199; these read QGNE…PEEL and EGLT…RESP. The Fibronectin type-III domain maps to 270-366; it reads MPTNVCLMVT…TTTPACASPS (97 aa). Residues 607–614 form a highly conserved peptide sequence region; it reads GLYLGYLK. Disordered stretches follow at residues 855-887, 945-964, and 1106-1146; these read NSTS…QPCS, VKTP…NPDH, and PWAS…SSML. The segment covering 1131–1146 has biased composition (polar residues); that stretch reads EGPTASPMSEILSSML.

In terms of biological role, may play a role in neuronal function. The protein is Ankyrin repeat and fibronectin type-III domain-containing protein 1 of Homo sapiens (Human).